Reading from the N-terminus, the 235-residue chain is Exosome complex component Rrp4 (235 aa).

The S1 motif domain maps to 67–139; sequence GDVVIGLIQS…KTRSPLLTVQ (73 aa). Residues 149 to 205 enclose the KH domain; it reads GKIVEISPAKVPRVIGRKMSMLKTLEEKTECKIFVARNGRIHLECPNEDLEAIAVMA.

It belongs to the RRP4 family. In terms of assembly, component of the archaeal exosome complex. Forms a trimer of Rrp4 and/or Csl4 subunits. The trimer associates with a hexameric ring-like arrangement composed of 3 Rrp41-Rrp42 heterodimers.

The protein resides in the cytoplasm. Functionally, non-catalytic component of the exosome, which is a complex involved in RNA degradation. Increases the RNA binding and the efficiency of RNA degradation. Confers strong poly(A) specificity to the exosome. This is Exosome complex component Rrp4 from Aeropyrum pernix (strain ATCC 700893 / DSM 11879 / JCM 9820 / NBRC 100138 / K1).